Reading from the N-terminus, the 289-residue chain is Phosphatidylglycerol--prolipoprotein diacylglyceryl transferase (289 aa).

3 helical membrane-spanning segments follow: residues 13 to 33 (LGPL…LLGW), 61 to 81 (FILW…VLFY), and 99 to 119 (GGMS…LFAM). Arg144 is an a 1,2-diacyl-sn-glycero-3-phospho-(1'-sn-glycerol) binding site. Helical transmembrane passes span 218-238 (GVVM…LENV) and 250-270 (LGLT…LWLI).

This sequence belongs to the Lgt family.

The protein resides in the cell inner membrane. The catalysed reaction is L-cysteinyl-[prolipoprotein] + a 1,2-diacyl-sn-glycero-3-phospho-(1'-sn-glycerol) = an S-1,2-diacyl-sn-glyceryl-L-cysteinyl-[prolipoprotein] + sn-glycerol 1-phosphate + H(+). The protein operates within protein modification; lipoprotein biosynthesis (diacylglyceryl transfer). Catalyzes the transfer of the diacylglyceryl group from phosphatidylglycerol to the sulfhydryl group of the N-terminal cysteine of a prolipoprotein, the first step in the formation of mature lipoproteins. This chain is Phosphatidylglycerol--prolipoprotein diacylglyceryl transferase, found in Phenylobacterium zucineum (strain HLK1).